We begin with the raw amino-acid sequence, 177 residues long: Dual-action ribosomal maturation protein DarP (177 aa).

The tract at residues 1 to 26 is disordered; sequence MKIVGDSEHFKQPYDSDEEYVSKTED.

This sequence belongs to the DarP family.

The protein resides in the cytoplasm. Functionally, member of a network of 50S ribosomal subunit biogenesis factors which assembles along the 30S-50S interface, preventing incorrect 23S rRNA structures from forming. Promotes peptidyl transferase center (PTC) maturation. This chain is Dual-action ribosomal maturation protein DarP, found in Shewanella sp. (strain ANA-3).